The primary structure comprises 562 residues: Probable E3 ubiquitin-protein ligase ARI7 (562 aa).

Residues 1-39 form a disordered region; that stretch reads MDSEEDMLDAHDMESGEDDFYSGGTDDCNDSDDGEPDYG. Residues 27-39 show a composition bias toward acidic residues; that stretch reads DCNDSDDGEPDYG. The segment at 133–346 is TRIAD supradomain; the sequence is SELTCGICFD…GGFYACNRYE (214 aa). Residues cysteine 137, cysteine 140, cysteine 154, histidine 156, cysteine 159, cysteine 162, cysteine 182, cysteine 187, cysteine 226, cysteine 231, cysteine 248, cysteine 250, cysteine 255, cysteine 258, histidine 263, cysteine 268, cysteine 295, and cysteine 298 each coordinate Zn(2+). The RING-type 1 zinc finger occupies 137-187; that stretch reads CGICFDSYPPEKIASVSCGHPFCTTCWTGYISTTINDGPGCLMLRCPDPSC. Residues 206–268 form an IBR-type zinc finger; that stretch reads EKYNRYFLRS…TEEAHRPVDC (63 aa). The RING-type 2; atypical zinc-finger motif lies at 295–325; sequence CPRCKRPIEKNQGCMHMTCTPPCKYEFCWLC. Cysteine 308 is a catalytic residue. Residues cysteine 313, cysteine 317, cysteine 322, cysteine 325, histidine 332, and cysteine 342 each contribute to the Zn(2+) site. The interval 524 to 562 is disordered; the sequence is ACSSKSTSSKSTGCSSKTRGKGKGSSRTGGSSRNPDDNL. The span at 525–540 shows a compositional bias: low complexity; it reads CSSKSTSSKSTGCSSK.

The protein belongs to the RBR family. Ariadne subfamily. Zn(2+) serves as cofactor. As to expression, ubiquitous.

It catalyses the reaction [E2 ubiquitin-conjugating enzyme]-S-ubiquitinyl-L-cysteine + [acceptor protein]-L-lysine = [E2 ubiquitin-conjugating enzyme]-L-cysteine + [acceptor protein]-N(6)-ubiquitinyl-L-lysine.. The protein operates within protein modification; protein ubiquitination. In terms of biological role, might act as an E3 ubiquitin-protein ligase, or as part of E3 complex, which accepts ubiquitin from specific E2 ubiquitin-conjugating enzymes and then transfers it to substrates. In Arabidopsis thaliana (Mouse-ear cress), this protein is Probable E3 ubiquitin-protein ligase ARI7 (ARI7).